We begin with the raw amino-acid sequence, 5162 residues long: Linear gramicidin synthase subunit B (5162 aa).

Carrier domains are found at residues 963–1038, 2027–2101, 3541–3616, and 4601–4675; these read APRN…QALR, EPQS…VVLE, APRN…GAIG, and AATS…GQST. 4 positions are modified to O-(pantetheine 4'-phosphoryl)serine: Ser998, Ser2062, Ser3576, and Ser4636.

This sequence belongs to the ATP-dependent AMP-binding enzyme family. Large multienzyme complex composed of 4 subunits; LgrA, LgrB, LgrC and LgrD. Pantetheine 4'-phosphate serves as cofactor.

In terms of biological role, activates the 3rd to 6th amino acids (Ala, D-Leu, Ala and D-Val) in linear gramicidin and catalyzes the formation of the peptide bond between them. This enzyme is also responsible for the epimerization of the 4th (D-Leu) and the 6th (D-Val) amino acids. This Brevibacillus parabrevis protein is Linear gramicidin synthase subunit B (lgrB).